The chain runs to 887 residues: Bifunctional uridylyltransferase/uridylyl-removing enzyme (887 aa).

A uridylyltransferase region spans residues 1-337; sequence MINTSPLLNY…RLPNYERKIE (337 aa). The segment at 339–699 is uridylyl-removing; the sequence is VNDHFKIVDN…AHRKAAQDAV (361 aa). The region spanning 457–579 is the HD domain; it reads VDAHTLLLLR…LGDMEHLDYL (123 aa). ACT domains follow at residues 700–782 and 809–887; these read QIFI…LMQR and MVEI…ICQH.

This sequence belongs to the GlnD family. Requires Mg(2+) as cofactor.

It catalyses the reaction [protein-PII]-L-tyrosine + UTP = [protein-PII]-uridylyl-L-tyrosine + diphosphate. The enzyme catalyses [protein-PII]-uridylyl-L-tyrosine + H2O = [protein-PII]-L-tyrosine + UMP + H(+). With respect to regulation, uridylyltransferase (UTase) activity is inhibited by glutamine, while glutamine activates uridylyl-removing (UR) activity. Its function is as follows. Modifies, by uridylylation and deuridylylation, the PII regulatory proteins (GlnB and homologs), in response to the nitrogen status of the cell that GlnD senses through the glutamine level. Under low glutamine levels, catalyzes the conversion of the PII proteins and UTP to PII-UMP and PPi, while under higher glutamine levels, GlnD hydrolyzes PII-UMP to PII and UMP (deuridylylation). Thus, controls uridylylation state and activity of the PII proteins, and plays an important role in the regulation of nitrogen assimilation and metabolism. This chain is Bifunctional uridylyltransferase/uridylyl-removing enzyme, found in Acinetobacter baumannii (strain ACICU).